We begin with the raw amino-acid sequence, 242 residues long: Myogenic factor 6 (242 aa).

The segment at 30-63 is disordered; that stretch reads GSPLYPGSDGTLSPCQDQLPPEAGSDSSGEEHVL. Positions 93 to 144 constitute a bHLH domain; sequence DRRKAATLRERRRLKKINEAFEALKRRTVANPNQRLPKVEILRSAISYIERL. Residues 190 to 210 form a disordered region; that stretch reads ASDHSRALGGSPKAGGSMVES.

In terms of assembly, efficient DNA binding requires dimerization with another bHLH protein. In terms of tissue distribution, skeletal muscle.

The protein resides in the nucleus. Involved in muscle differentiation (myogenic factor). Induces fibroblasts to differentiate into myoblasts. Probable sequence specific DNA-binding protein. The protein is Myogenic factor 6 (MYF6) of Gallus gallus (Chicken).